Consider the following 392-residue polypeptide: tRNA(Met) cytidine acetate ligase (392 aa).

ATP-binding positions include 7 to 20, G101, N162, and 187 to 188; these read VVEY…HQLH and RI.

It belongs to the TmcAL family.

Its subcellular location is the cytoplasm. It catalyses the reaction cytidine(34) in elongator tRNA(Met) + acetate + ATP = N(4)-acetylcytidine(34) in elongator tRNA(Met) + AMP + diphosphate. Functionally, catalyzes the formation of N(4)-acetylcytidine (ac(4)C) at the wobble position of elongator tRNA(Met), using acetate and ATP as substrates. First activates an acetate ion to form acetyladenylate (Ac-AMP) and then transfers the acetyl group to tRNA to form ac(4)C34. In Listeria welshimeri serovar 6b (strain ATCC 35897 / DSM 20650 / CCUG 15529 / CIP 8149 / NCTC 11857 / SLCC 5334 / V8), this protein is tRNA(Met) cytidine acetate ligase.